The sequence spans 224 residues: UPF0758 protein Avin_02940 (224 aa).

The 123-residue stretch at Ala-102–Leu-224 folds into the MPN domain. The Zn(2+) site is built by His-173, His-175, and Asp-186. Positions His-173–Asp-186 match the JAMM motif motif.

Belongs to the UPF0758 family.

The chain is UPF0758 protein Avin_02940 from Azotobacter vinelandii (strain DJ / ATCC BAA-1303).